The sequence spans 907 residues: Chloride channel protein 2 (907 aa).

Over 1–93 (MAAATAAAAT…RCHKFLVSRV (93 aa)) the chain is Cytoplasmic. An essential for channel gating by both voltage and cell volume region spans residues 22–40 (QYEQTLMYGRYTQELGAFA). At Thr-26 the chain carries Phosphothreonine. The modulates channel gating by both voltage and cell volume stretch occupies residues 42-55 (EEAARIRLGGPEPW). Transmembrane regions (helical) follow at residues 94-127 (GEDW…AQQW) and 136-161 (ILLQ…TQIL). Residues 167–171 (GSGIP) carry the Selectivity filter part_1 motif. The helical intramembrane region spans 170–177 (IPEMKTIL). The next 2 membrane-spanning stretches (helical) occupy residues 186 to 204 (LTLK…ALGS) and 211 to 229 (EGPF…SKFL). The Selectivity filter part_2 signature appears at 209-213 (GKEGP). 2 consecutive intramembrane regions (helical) follow at residues 245–257 (MLAA…VGCC) and 261–269 (PIGGVLFSI). 5 helical membrane passes run 281–301 (YWRG…LAVW), 327–355 (LPAF…VQVM), 364–383 (FLMK…ISTL), 435–455 (ANVF…SALA), and 463–486 (GAFM…MAAW). Residues 463–467 (GAFMP) carry the Selectivity filter part_3 motif. The helical intramembrane region spans 503–517 (GGYAVVGAAALAGAV). An intramembrane region (note=Loop between two helices) is located at residues 518–519 (TH). Residues 520 to 531 (TVSTAVIVFELT) constitute an intramembrane region (helical). Positions 532-536 (GQIAH) form an intramembrane region, note=Loop between two helices. The helical transmembrane segment at 537 to 554 (ILPVMIAVILANAVAQSL) threads the bilayer. Topologically, residues 555 to 907 (QPSLYDSIIR…TPSDSDDKCQ (353 aa)) are cytoplasmic. The 59-residue stretch at 590 to 648 (MVRDVPHVALSCTFRDLRLALHRTKGRMLALVESPESMILLGSIERSQVVALLGAQLSP) folds into the CBS 1 domain. Residues 650–660 (RRRQHMQKLRK) show a composition bias toward basic residues. Residues 650-720 (RRRQHMQKLR…NATSLQEGTT (71 aa)) form a disordered region. The span at 664-678 (SPPSDQESPPSSETS) shows a compositional bias: low complexity. Residues 696 to 705 (QTHKPLKPAL) are compositionally biased toward basic residues. Positions 710-720 (SNATSLQEGTT) are enriched in polar residues. Ser-767 carries the phosphoserine modification. The region spanning 799–859 (IDPAPFQLVE…GSVTAQGVKV (61 aa)) is the CBS 2 domain. A Basolateral membrane sorting motif is present at residues 821 to 822 (LL). Residues 865 to 907 (SFRDSATSSSDTETTEVHALWGPRSRHGLPREGTPSDSDDKCQ) are disordered.

Belongs to the chloride channel (TC 2.A.49) family. ClC-2/CLCN2 subfamily. As to quaternary structure, homodimer. Interacts with auxiliary subunit HEPACAM. In terms of processing, phosphorylated. Activated by dephosphorylation. As to expression, ubiquitously expressed. Expressed in neurons and glial cells (at protein level).

The protein localises to the cell membrane. It localises to the basolateral cell membrane. Its subcellular location is the cell projection. It is found in the dendritic spine membrane. The protein resides in the axon. It carries out the reaction chloride(in) = chloride(out). The enzyme catalyses thiocyanate(in) = thiocyanate(out). The catalysed reaction is bromide(in) = bromide(out). It catalyses the reaction nitrate(in) = nitrate(out). It carries out the reaction iodide(out) = iodide(in). Common gate kinetics are down-regulated by intracellular ATP. Inhibited by AK-42, a derivative of meclofenamate. Inhibited by Cd(2+). Inhibited by Zn(2+) and PKC activation. Inhibited at acidic pH. CCLN2:HEPACAM channel conductance is up-regulated upon hypo-osmolarity. Its function is as follows. Voltage-gated and osmosensitive chloride channel. Forms a homodimeric channel where each subunit has its own ion conduction pathway. Conducts double-barreled currents controlled by two types of gates, two fast glutamate gates that control each subunit independently and a slow common gate that opens and shuts off both subunits simultaneously. Displays inward rectification currents activated upon membrane hyperpolarization and extracellular hypotonicity. Contributes to chloride conductance involved in neuron excitability. In hippocampal neurons, generates a significant part of resting membrane conductance and provides an additional chloride efflux pathway to prevent chloride accumulation in dendrites upon GABA receptor activation. In glia, associates with the auxiliary subunit HEPACAM/GlialCAM at astrocytic processes and myelinated fiber tracts where it may regulate transcellular chloride flux buffering extracellular chloride and potassium concentrations. Regulates aldosterone production in adrenal glands. The opening of CLCN2 channels at hyperpolarized membrane potentials in the glomerulosa causes cell membrane depolarization, activation of voltage-gated calcium channels and increased expression of aldosterone synthase, the rate-limiting enzyme for aldosterone biosynthesis. Contributes to chloride conductance in retinal pigment epithelium involved in phagocytosis of shed photoreceptor outer segments and photoreceptor renewal. Conducts chloride currents at the basolateral membrane of epithelial cells with a role in chloride reabsorption rather than secretion. Permeable to small monovalent anions with chloride &gt; thiocyanate &gt; bromide &gt; nitrate &gt; iodide ion selectivity. The chain is Chloride channel protein 2 (Clcn2) from Rattus norvegicus (Rat).